The chain runs to 103 residues: UPF0145 protein Amet_0532 (103 aa).

Belongs to the UPF0145 family.

This Alkaliphilus metalliredigens (strain QYMF) protein is UPF0145 protein Amet_0532.